Reading from the N-terminus, the 272-residue chain is uncharacterized protein (272 aa).

Catalysis depends on residues aspartate 71 and glutamate 163.

This sequence belongs to the glycosyl hydrolase 25 family.

This is an uncharacterized protein from Escherichia coli (strain K12).